Reading from the N-terminus, the 30-residue chain is Cytochrome c3, 50 kDa (30 aa).

As to quaternary structure, monomer. Binds 4 heme groups per subunit.

The protein localises to the periplasm. Participates in sulfate respiration coupled with phosphorylation by transferring electrons from the enzyme dehydrogenase to ferredoxin. The polypeptide is Cytochrome c3, 50 kDa (Desulfuromonas acetoxidans (Chloropseudomonas ethylica)).